A 159-amino-acid chain; its full sequence is Intron-encoded endonuclease ai4 (159 aa).

The protein belongs to the LAGLIDADG endonuclease family.

It is found in the mitochondrion. Mitochondrial DNA endonuclease involved in intron homing. This chain is Intron-encoded endonuclease ai4 (ai4), found in Dictyostelium discoideum (Social amoeba).